A 115-amino-acid polypeptide reads, in one-letter code: Phosphoribosyl-AMP cyclohydrolase (115 aa).

Position 80 (Asp80) interacts with Mg(2+). Cys81 is a Zn(2+) binding site. The Mg(2+) site is built by Asp82 and Asp84. 2 residues coordinate Zn(2+): Cys97 and Cys104.

Belongs to the PRA-CH family. Homodimer. Requires Mg(2+) as cofactor. Zn(2+) serves as cofactor.

The protein localises to the cytoplasm. The enzyme catalyses 1-(5-phospho-beta-D-ribosyl)-5'-AMP + H2O = 1-(5-phospho-beta-D-ribosyl)-5-[(5-phospho-beta-D-ribosylamino)methylideneamino]imidazole-4-carboxamide. The protein operates within amino-acid biosynthesis; L-histidine biosynthesis; L-histidine from 5-phospho-alpha-D-ribose 1-diphosphate: step 3/9. Catalyzes the hydrolysis of the adenine ring of phosphoribosyl-AMP. This is Phosphoribosyl-AMP cyclohydrolase from Mycolicibacterium gilvum (strain PYR-GCK) (Mycobacterium gilvum (strain PYR-GCK)).